The following is a 157-amino-acid chain: Histone H2B.3 (157 aa).

The segment at 1 to 64 is disordered; the sequence is MAPKKEEKPA…DKKSKKKAKV (64 aa). Basic residues predominate over residues 26–42; the sequence is KAVKAPKKKEKKAPAKK. Residue Lys153 forms a Glycyl lysine isopeptide (Lys-Gly) (interchain with G-Cter in ubiquitin) linkage.

This sequence belongs to the histone H2B family. The nucleosome is a histone octamer containing two molecules each of H2A, H2B, H3 and H4 assembled in one H3-H4 heterotetramer and two H2A-H2B heterodimers. The octamer wraps approximately 147 bp of DNA. Post-translationally, monoubiquitinated to form H2BK143ub1; may give a specific tag for epigenetic transcriptional activation.

The protein resides in the nucleus. It localises to the chromosome. Its function is as follows. Core component of nucleosome. Nucleosomes wrap and compact DNA into chromatin, limiting DNA accessibility to the cellular machineries which require DNA as a template. Histones thereby play a central role in transcription regulation, DNA repair, DNA replication and chromosomal stability. DNA accessibility is regulated via a complex set of post-translational modifications of histones, also called histone code, and nucleosome remodeling. This is Histone H2B.3 from Volvox carteri (Green alga).